The sequence spans 158 residues: Phosphopantetheine adenylyltransferase (158 aa).

Ser8 is a substrate binding site. Residues 8 to 9 and His16 contribute to the ATP site; that span reads SF. Residues Lys40, Thr72, and Arg86 each contribute to the substrate site. Residues 87 to 89, Glu97, and 122 to 128 contribute to the ATP site; these read GLR and HSFLSSS.

This sequence belongs to the bacterial CoaD family. As to quaternary structure, homohexamer. Requires Mg(2+) as cofactor.

Its subcellular location is the cytoplasm. It catalyses the reaction (R)-4'-phosphopantetheine + ATP + H(+) = 3'-dephospho-CoA + diphosphate. The protein operates within cofactor biosynthesis; coenzyme A biosynthesis; CoA from (R)-pantothenate: step 4/5. In terms of biological role, reversibly transfers an adenylyl group from ATP to 4'-phosphopantetheine, yielding dephospho-CoA (dPCoA) and pyrophosphate. The protein is Phosphopantetheine adenylyltransferase of Prochlorococcus marinus (strain NATL2A).